The sequence spans 199 residues: Protein MA_3591 (199 aa).

Residues 5–196 (TEGRVAVKLA…EKEPEGEVIE (192 aa)) enclose the AMMECR1 domain.

The protein is Protein MA_3591 of Methanosarcina acetivorans (strain ATCC 35395 / DSM 2834 / JCM 12185 / C2A).